Consider the following 208-residue polypeptide: Guanylate kinase (208 aa).

The 180-residue stretch at 5–184 (GLLIVFSGPS…AAERVKCVIE (180 aa)) folds into the Guanylate kinase-like domain. Position 12–19 (12–19 (GPSGVGKG)) interacts with ATP.

The protein belongs to the guanylate kinase family.

Its subcellular location is the cytoplasm. The enzyme catalyses GMP + ATP = GDP + ADP. Functionally, essential for recycling GMP and indirectly, cGMP. This chain is Guanylate kinase, found in Streptococcus pneumoniae serotype 4 (strain ATCC BAA-334 / TIGR4).